The chain runs to 238 residues: Probable transcriptional regulatory protein CAB166 (238 aa).

Belongs to the TACO1 family.

It localises to the cytoplasm. In Chlamydia abortus (strain DSM 27085 / S26/3) (Chlamydophila abortus), this protein is Probable transcriptional regulatory protein CAB166.